The chain runs to 421 residues: Medium-chain specific acyl-CoA dehydrogenase, mitochondrial (421 aa).

The N-terminal 25 residues, 1–25, are a transit peptide targeting the mitochondrion; the sequence is MAAAFRRGCRVLRSVSHFECRTQHS. 2 positions are modified to N6-acetyllysine; alternate: Lys30 and Lys69. N6-succinyllysine; alternate occurs at positions 30 and 69. An N6-acetyllysine modification is found at Lys79. 158 to 167 provides a ligand contact to FAD; sequence YCVTEPSAGS. Ser167 contributes to the octanoyl-CoA binding site. Residue Lys179 is modified to N6-succinyllysine. 191-193 lines the FAD pocket; it reads WIT. The residue at position 212 (Lys212) is an N6-acetyllysine; alternate. Residue Lys212 is modified to N6-succinyllysine; alternate. Ser216 lines the octanoyl-CoA pocket. Residues Lys217, Lys235, Lys259, and Lys271 each carry the N6-acetyllysine; alternate modification. An N6-succinyllysine; alternate mark is found at Lys217, Lys235, Lys259, and Lys271. Asp278 and Arg281 together coordinate octanoyl-CoA. An N6-acetyllysine modification is found at Lys301. FAD contacts are provided by residues 306-308 and 316-317; these read RKT and HQ. Octanoyl-CoA is bound by residues Arg349 and Thr351. Thr351 bears the Phosphothreonine mark. Residue 374–378 coordinates FAD; the sequence is QIFGG. Glu401 serves as a coordination point for octanoyl-CoA. Glu401 acts as the Proton acceptor in catalysis. Residue 402–405 coordinates FAD; it reads GTAQ.

The protein belongs to the acyl-CoA dehydrogenase family. In terms of assembly, homotetramer. Interacts with the heterodimeric electron transfer flavoprotein ETF. FAD serves as cofactor. Post-translationally, acetylated. Could occur at proximity of the cofactor-binding sites and reduce the catalytic activity. Could be deacetylated by SIRT3.

The protein resides in the mitochondrion matrix. The catalysed reaction is a medium-chain 2,3-saturated fatty acyl-CoA + oxidized [electron-transfer flavoprotein] + H(+) = a medium-chain (2E)-enoyl-CoA + reduced [electron-transfer flavoprotein]. It carries out the reaction pentanoyl-CoA + oxidized [electron-transfer flavoprotein] + H(+) = (2E)-pentenoyl-CoA + reduced [electron-transfer flavoprotein]. It catalyses the reaction hexanoyl-CoA + oxidized [electron-transfer flavoprotein] + H(+) = (2E)-hexenoyl-CoA + reduced [electron-transfer flavoprotein]. The enzyme catalyses octanoyl-CoA + oxidized [electron-transfer flavoprotein] + H(+) = (2E)-octenoyl-CoA + reduced [electron-transfer flavoprotein]. The catalysed reaction is decanoyl-CoA + oxidized [electron-transfer flavoprotein] + H(+) = (2E)-decenoyl-CoA + reduced [electron-transfer flavoprotein]. It carries out the reaction dodecanoyl-CoA + oxidized [electron-transfer flavoprotein] + H(+) = (2E)-dodecenoyl-CoA + reduced [electron-transfer flavoprotein]. It catalyses the reaction tetradecanoyl-CoA + oxidized [electron-transfer flavoprotein] + H(+) = (2E)-tetradecenoyl-CoA + reduced [electron-transfer flavoprotein]. The enzyme catalyses oxidized [electron-transfer flavoprotein] + hexadecanoyl-CoA + H(+) = (2E)-hexadecenoyl-CoA + reduced [electron-transfer flavoprotein]. Its pathway is lipid metabolism; mitochondrial fatty acid beta-oxidation. Functionally, medium-chain specific acyl-CoA dehydrogenase is one of the acyl-CoA dehydrogenases that catalyze the first step of mitochondrial fatty acid beta-oxidation, an aerobic process breaking down fatty acids into acetyl-CoA and allowing the production of energy from fats. The first step of fatty acid beta-oxidation consists in the removal of one hydrogen from C-2 and C-3 of the straight-chain fatty acyl-CoA thioester, resulting in the formation of trans-2-enoyl-CoA. Electron transfer flavoprotein (ETF) is the electron acceptor that transfers electrons to the main mitochondrial respiratory chain via ETF-ubiquinone oxidoreductase (ETF dehydrogenase). Among the different mitochondrial acyl-CoA dehydrogenases, medium-chain specific acyl-CoA dehydrogenase acts specifically on acyl-CoAs with saturated 6 to 12 carbons long primary chains. The sequence is that of Medium-chain specific acyl-CoA dehydrogenase, mitochondrial from Mus musculus (Mouse).